The primary structure comprises 412 residues: MNNCRQNLENFDPEVFGYLNDEIKRQEEHIELIASENFVSKAVLETMGTELTNKYAEGYPGKRYYGGCEHVDKIEQLAIDRLKKLFNADHANVQPHCGANANIAVYVAVLKPGDTVLGMRLTEGGHLTHGSPVNMSGKFYNFVDYGVDPETGTIDYENVRELALKHKPKLIVAGASAYPRIIDFKKFREIADEVGAYLMVDMAHIAGLVATGDHPSPVPYADFVTTTTHKTLRGPRGGAILCKEEHKKLLDKSVFPGFQGGPLEHIIAAKAVCFKEDLQPEFKEYTHQILKNAKAMEKVFLDNDVRLVSGGTDNHLLLIDCRSFGMTGKEAENVLSEVNITTNKNTIPNDPETPFVTSGIRIGTPAITTRGLKEAEATKVAEFMIDALKKRRPAEEIKNDVVELMKQFPINR.

Residues L121 and 125–127 (GHL) each bind (6S)-5,6,7,8-tetrahydrofolate. K230 is subject to N6-(pyridoxal phosphate)lysine. 353-355 (TPF) is a (6S)-5,6,7,8-tetrahydrofolate binding site.

It belongs to the SHMT family. As to quaternary structure, homodimer. The cofactor is pyridoxal 5'-phosphate.

The protein localises to the cytoplasm. The enzyme catalyses (6R)-5,10-methylene-5,6,7,8-tetrahydrofolate + glycine + H2O = (6S)-5,6,7,8-tetrahydrofolate + L-serine. It participates in one-carbon metabolism; tetrahydrofolate interconversion. The protein operates within amino-acid biosynthesis; glycine biosynthesis; glycine from L-serine: step 1/1. In terms of biological role, catalyzes the reversible interconversion of serine and glycine with tetrahydrofolate (THF) serving as the one-carbon carrier. This reaction serves as the major source of one-carbon groups required for the biosynthesis of purines, thymidylate, methionine, and other important biomolecules. Also exhibits THF-independent aldolase activity toward beta-hydroxyamino acids, producing glycine and aldehydes, via a retro-aldol mechanism. This Finegoldia magna (strain ATCC 29328 / DSM 20472 / WAL 2508) (Peptostreptococcus magnus) protein is Serine hydroxymethyltransferase.